Reading from the N-terminus, the 185-residue chain is F-box protein At1g61340 (185 aa).

The region spanning 78-126 (SRELEDLPLDILVRIICGVEHEDLKQLFHVSKTIREATMIAKQSHFAYS) is the F-box domain.

In Arabidopsis thaliana (Mouse-ear cress), this protein is F-box protein At1g61340.